We begin with the raw amino-acid sequence, 952 residues long: uncharacterized protein (952 aa).

The CheB-type methylesterase domain occupies 1–141 (MASLLARHTK…PWIADYLIRR (141 aa)). Residues 168 to 440 (VGQFDGLEPA…SARHRIWQAL (273 aa)) form the CheR-type methyltransferase domain. A compositionally biased stretch (polar residues) spans 923–935 (HNQTEASPETSSG). The interval 923–952 (HNQTEASPETSSGGLPGSDGTGADGGAPRA) is disordered. The span at 936 to 952 (GLPGSDGTGADGGAPRA) shows a compositional bias: gly residues.

This is an uncharacterized protein from Rhodobacter capsulatus (Rhodopseudomonas capsulata).